The chain runs to 124 residues: MEDERWKLSSSKGRSKSGRSCSSSSNYYCHSSDFNSSNATTLSRSYSASVTASRHATTAWSAAGAGGGGASSSSSSQHQHQQQQQQSNNSQRLSKKCVEAVKEHRARFYIVRRCVSMLVCWRDY.

The disordered stretch occupies residues 1–25 (MEDERWKLSSSKGRSKSGRSCSSSS). Asn-35 and Asn-38 each carry an N-linked (GlcNAc...) asparagine glycan. Residues 59–75 (AWSAAGAGGGGASSSSS) traverse the membrane as a helical segment. Residues 60 to 95 (WSAAGAGGGGASSSSSSQHQHQQQQQQSNNSQRLSK) are disordered. Residues 71-91 (SSSSSSQHQHQQQQQQSNNSQ) are compositionally biased toward low complexity. Asn-88 carries an N-linked (GlcNAc...) asparagine glycan. The tract at residues 92-124 (RLSKKCVEAVKEHRARFYIVRRCVSMLVCWRDY) is required for DVL/RTFL small polypeptide activity.

The protein belongs to the DVL/RTFL small polypeptides family.

The protein localises to the cell membrane. In terms of biological role, small polypeptide acting as a regulatory molecule which coordinates cellular responses required for differentiation, growth and development, probably by restricting polar cell proliferation in lateral organs (e.g. leaves and petioles). This Oryza sativa subsp. indica (Rice) protein is Small polypeptide ROTUNDIFOLIA LIKE 3.